A 131-amino-acid polypeptide reads, in one-letter code: Type IV wide pilus major component PilA4 (131 aa).

Residues 1-6 (MRNAKG) constitute a propeptide, leader sequence. Residue F7 is modified to N-methylphenylalanine. A helical transmembrane segment spans residues 7–27 (FTLIELLIVIAIIAILAAVLI). A disulfide bridge links C95 with C130.

Interacts with PilQ. In terms of processing, found in three forms of 14-kDa, 18-kDa and a glycosylated 23-kDa form. Both narrow and wide pili are glycosylated.

It is found in the cell inner membrane. Its subcellular location is the cell outer membrane. The protein localises to the periplasm. Functionally, plays an essential role in the assembly of two types of T4P pili: a wide and a narrow that participate in natural transformation and twitching motility. Major component of the wide pilus that is essential for natural transformation working as a DNA translocator structure that spans the inner and outer membranes. In addition, participates in the assembly of the narrow pilus composed of the PilA5 subunit that is required for twitching motility. The polypeptide is Type IV wide pilus major component PilA4 (pilA4) (Thermus thermophilus (strain ATCC BAA-163 / DSM 7039 / HB27)).